The sequence spans 438 residues: MEILVFMDSYGLSTQLSMETLHGSLTDPAISSMNLLNELIDEYPVAISMAAGRPYEEFFDVRLIHEYIDAYCDHLRHDRKLAEAVVTRTLFQYGTTKGIIADLIARNLAEDENIDAAAESVVVTVGAQEAMFLILRTLRADERDVLLAPAPTYVGLTGAALLTDTPVWPVQSTANGVDPEDLVLQLKRADEQGKRVRACYVTPNFANPTGTSMDLPARHRLLEVAEANGILLLEDNAYGLFGSERLPSLKSLDRSGNVVYIGSFAKTGMPGARVGYVVADQRVAGGGLLADQLSKLKGMLTVNTSPIAQAVIAGKLLLNDFSLTKANAREIAIYQRNLQLTLSELERTLGGLPEVGWNTPTGGFFVTVTVPFVVDDELLAHAARDHGVLFTPMHHFYGGKDGFNQLRLSISLLTPELIKEGVTRLAALITARLRWPRA.

The residue at position 266 (K266) is an N6-(pyridoxal phosphate)lysine.

The protein belongs to the class-I pyridoxal-phosphate-dependent aminotransferase family. It depends on pyridoxal 5'-phosphate as a cofactor.

The enzyme catalyses (S)-3,5-dihydroxyphenylglycine + 2-oxoglutarate = 2-(3,5-dihydroxyphenyl)-2-oxoacetate + L-glutamate. Its pathway is antibiotic biosynthesis; vancomycin biosynthesis. Functionally, catalyzes the transamination of p-hydroxybenzoylformate to L-p-hydroxyphenylglycine as part of the biosynthesis of the (S)-3,5-dihydroxyphenylglycine constituent of the glycopeptide antibiotic chloroeremomycin, a member of the vancomycin group of antibiotics. The protein is (S)-3,5-dihydroxyphenylglycine transaminase (hpgT) of Amycolatopsis orientalis (Nocardia orientalis).